A 152-amino-acid polypeptide reads, in one-letter code: FAD synthase (152 aa).

ATP is bound by residues 16 to 17 (TF), 21 to 24 (HPGH), aspartate 101, and tyrosine 129.

It belongs to the archaeal FAD synthase family. As to quaternary structure, homodimer. A divalent metal cation is required as a cofactor.

It catalyses the reaction FMN + ATP + H(+) = FAD + diphosphate. It functions in the pathway cofactor biosynthesis; FAD biosynthesis; FAD from FMN: step 1/1. Functionally, catalyzes the transfer of the AMP portion of ATP to flavin mononucleotide (FMN) to produce flavin adenine dinucleotide (FAD) coenzyme. This chain is FAD synthase, found in Methanocaldococcus vulcanius (strain ATCC 700851 / DSM 12094 / M7) (Methanococcus vulcanius).